A 211-amino-acid chain; its full sequence is Protein-L-isoaspartate O-methyltransferase (211 aa).

Ser-60 is an active-site residue.

This sequence belongs to the methyltransferase superfamily. L-isoaspartyl/D-aspartyl protein methyltransferase family.

It is found in the cytoplasm. The catalysed reaction is [protein]-L-isoaspartate + S-adenosyl-L-methionine = [protein]-L-isoaspartate alpha-methyl ester + S-adenosyl-L-homocysteine. Its function is as follows. Catalyzes the methyl esterification of L-isoaspartyl residues in peptides and proteins that result from spontaneous decomposition of normal L-aspartyl and L-asparaginyl residues. It plays a role in the repair and/or degradation of damaged proteins. This Hahella chejuensis (strain KCTC 2396) protein is Protein-L-isoaspartate O-methyltransferase.